The chain runs to 547 residues: Sesterfisheric acid synthase (547 aa).

The helical transmembrane segment at 19-39 threads the bilayer; that stretch reads IMGCSLGTGLLVSMIIYNYFF. N-linked (GlcNAc...) asparagine glycans are attached at residues N341 and N404. C490 contacts heme.

The protein belongs to the cytochrome P450 family. Heme is required as a cofactor.

Its subcellular location is the membrane. The enzyme catalyses sesterfisherol + 3 reduced [NADPH--hemoprotein reductase] + 3 O2 = sesterfisherate + 3 oxidized [NADPH--hemoprotein reductase] + 4 H2O + 4 H(+). It functions in the pathway secondary metabolite biosynthesis; terpenoid biosynthesis. In terms of biological role, cytochrome P450 monooxygenase; part of the gene cluster that mediates the biosynthesis of sesterfisheric acid. The bifunctional terpene synthase NfSS converts DMAPP and IPP, and also GGPP, into sesterfisherol. The C-terminal prenyltransferase (PT) domain of NfSS catalyzes formation of GFPP, whereas the N-terminal terpene cyclase (TC) domain catalyzes the cyclization of GFPP to sesterfisherol. The cytochrome P450 monooxygenase NfP450 then catalyzes oxidative modifications of sesterfisherol into sesterfisheric acid. The chain is Sesterfisheric acid synthase from Neosartorya fischeri (strain ATCC 1020 / DSM 3700 / CBS 544.65 / FGSC A1164 / JCM 1740 / NRRL 181 / WB 181) (Aspergillus fischerianus).